The primary structure comprises 1185 residues: MEHHEDNAQLDNYLQNRLAESLQICGGAGEHNPHLADATGGNGCAPGIAPSKSDEVDGEEDEEWKYIHEVRQSEKLQQEKLPLTKETGNGFGPGRDSDNQVHGNGAAAVFNLYEEDVEVIKNDGDFSTNSNTTTSTDEVVARQAQEPNQLPEQLQQQQQIESQGVHEDPRQEDEDEHSSVATTYGTSSLSENNSSPLDQEEVVMVAQTVGQEQLVDFDNKENSYFVKNLEENHSQLNPNAVAFVPGVGSQSSSPLPAAEDPLPGVQPRPFLPGGTLDDLVAESPRKEFARINMDGIAVPDEREFDIEADMRPHELEQESDTFGAGHLEMQLLNGIGTADQAALRDVLDHGPETSVDMELPLDQVPNDADIMKQSIYAEHNSSIEDILNSVQPLPIQTCDDKELIHVEEKEHVSKSPSTEELQFQSDFPNNQESHTLFNNTEQDPMQASFYLEHTSQKAQEGCQEQMQLPAECSDIFADQSLLLDTSAPQLSSEADSPVAKLELESQQAGIVDITPSPLSSTAEKHLVEDTKELVEEYTLDPESHFFGVVSSQAPLQLFGKHTLPSIIHSCKHRVASEQNDEENAVFESVSGYETQNFDEISSPPEGINPFAQPFTPAHLVIEQANTMMEDVGGMPIPASEDFAICDKVASKSSNEVEDHRSEQQAFVKEELLHPVGDVVAQVENLGTEKNFVVEEERLPISVSDEIPLSSASKEKLLPDTTDEQLLTSALEEKLRSVAPEESVSTAADGQSISQFDEYVIASNKPLEDILEPEKDVEVAKSLSEKTSVATVAGGAVVGATKTHSATKAGSTAASAKSKTETLVMKKTTASSTSVYGANKSAAPRPSTARLGIKSTSIATKTSTTSSLTGNPRKSLSSNVGSTVKPPTKLSGTRPATAPVSKVTLGAKTITNKPTASGTASDNVTRTTLRPLVSTNARRPATSGTGSVASSTARRPVTNAKGSAPGSAASTKVRPAATMTAPVKPKVLSPRSTISSTTTVRKVPSTSTPSFSTRSPNKQQSNGLGKNTSSTTTSTATATITKSFTARSAPKFTHSASLTYNNGSTSRRLLVPGSSSTTTTSSLRKSSPLKAAPGKAASKPLTPQSKDGTAKSSPAVLKARNSTLMGGEGVAPSNECVPTPNGQINAEEVVKLKGKGLAEEVKIIEEQKLHEQDVPAHNAEVPLLDF.

Over residues 146 to 159 (EPNQLPEQLQQQQQ) the composition is skewed to low complexity. Residues 146-196 (EPNQLPEQLQQQQQIESQGVHEDPRQEDEDEHSSVATTYGTSSLSENNSSP) are disordered. Residues 179–196 (SVATTYGTSSLSENNSSP) are compositionally biased toward polar residues. Phosphoserine is present on residues S354 and S448. Position 450 is a phosphotyrosine (Y450). Phosphoserine is present on residues S709, S710, and S712. Position 721 is a phosphothreonine (T721). S728 is modified (phosphoserine). The segment at 745-977 (TAADGQSISQ…ASTKVRPAAT (233 aa)) is microtubule-binding. Residues 856-866 (SIATKTSTTSS) are compositionally biased toward low complexity. 2 disordered regions span residues 856 to 1035 (SIAT…TSTA) and 1054 to 1114 (SASL…SSPA). Composition is skewed to polar residues over residues 867–881 (LTGNPRKSLSSNVGS) and 908–936 (TITNKPTASGTASDNVTRTTLRPLVSTNA). S874 carries the post-translational modification Phosphoserine. Low complexity predominate over residues 940-952 (ATSGTGSVASSTA). Positions 989 to 999 (PRSTISSTTTV) are enriched in polar residues. A compositionally biased stretch (low complexity) spans 1003–1015 (PSTSTPSFSTRSP). Composition is skewed to polar residues over residues 1016-1026 (NKQQSNGLGKN) and 1054-1066 (SASLTYNNGSTSR). A phosphoserine mark is found at S1075 and S1086. Positions 1100–1111 (LTPQSKDGTAKS) are enriched in polar residues. A Phosphoserine modification is found at S1121.

The protein resides in the cytoplasm. It is found in the cytoskeleton. It localises to the spindle. May play an important role in the regulation of microtubule assembly and interaction. In Drosophila melanogaster (Fruit fly), this protein is 205 kDa microtubule-associated protein (Map205).